The chain runs to 302 residues: Sulfate adenylyltransferase subunit 2 (302 aa).

The segment at 280–302 (RQGRAIDHDQSGSMELKKRQGYF) is disordered.

This sequence belongs to the PAPS reductase family. CysD subfamily. Heterodimer composed of CysD, the smaller subunit, and CysN.

The enzyme catalyses sulfate + ATP + H(+) = adenosine 5'-phosphosulfate + diphosphate. The protein operates within sulfur metabolism; hydrogen sulfide biosynthesis; sulfite from sulfate: step 1/3. Functionally, with CysN forms the ATP sulfurylase (ATPS) that catalyzes the adenylation of sulfate producing adenosine 5'-phosphosulfate (APS) and diphosphate, the first enzymatic step in sulfur assimilation pathway. APS synthesis involves the formation of a high-energy phosphoric-sulfuric acid anhydride bond driven by GTP hydrolysis by CysN coupled to ATP hydrolysis by CysD. This chain is Sulfate adenylyltransferase subunit 2, found in Vibrio atlanticus (strain LGP32) (Vibrio splendidus (strain Mel32)).